Reading from the N-terminus, the 359-residue chain is Putative nucleotidyltransferase MAB21L1 (359 aa).

A ribonucleoside 5'-triphosphate contacts are provided by residues 23 to 24 (RK) and 63 to 66 (YEGL). Positions 73 and 75 each coordinate Mg(2+). A ribonucleoside 5'-triphosphate contacts are provided by residues Lys248 and 252–255 (SLLK).

The protein belongs to the mab-21 family. As to quaternary structure, monomer. Homodecamer; composed of 2 back to back homopentamers. The protein may exist as monomer in solution and oiligomerizes upon ligand binding.

Its subcellular location is the nucleus. Putative nucleotidyltransferase required for several aspects of embryonic development including normal development of the eye. It is unclear whether it displays nucleotidyltransferase activity in vivo. Binds single-stranded RNA (ssRNA). The polypeptide is Putative nucleotidyltransferase MAB21L1 (mab21l1) (Xenopus tropicalis (Western clawed frog)).